Consider the following 205-residue polypeptide: Ribonuclease HII (205 aa).

The RNase H type-2 domain occupies 15–205; the sequence is SQVCGIDEAG…SFKLRKLGEK (191 aa). D21, E22, and D117 together coordinate a divalent metal cation.

It belongs to the RNase HII family. Requires Mn(2+) as cofactor. Mg(2+) serves as cofactor.

The protein resides in the cytoplasm. It carries out the reaction Endonucleolytic cleavage to 5'-phosphomonoester.. In terms of biological role, endonuclease that specifically degrades the RNA of RNA-DNA hybrids. The polypeptide is Ribonuclease HII (Chlorobaculum tepidum (strain ATCC 49652 / DSM 12025 / NBRC 103806 / TLS) (Chlorobium tepidum)).